The chain runs to 828 residues: G-type lectin S-receptor-like serine/threonine-protein kinase At2g19130 (828 aa).

An N-terminal signal peptide occupies residues 1–22 (MVSFLTLTSFFFICFFIHGSSA). The Bulb-type lectin domain maps to 23 to 146 (VDTISGDFTL…GSSLSANVLW (124 aa)). Residues 23–439 (VDTISGDFTL…GASGKSNNKG (417 aa)) are Extracellular-facing. Asn-85, Asn-113, Asn-203, Asn-234, Asn-240, and Asn-255 each carry an N-linked (GlcNAc...) asparagine glycan. In terms of domain architecture, EGF-like spans 286-322 (PRQQCQVYRYCGSFGICSDKSEPFCRCPQGFRPMSQK). Intrachain disulfides connect Cys-290-Cys-302, Cys-296-Cys-310, Cys-372-Cys-394, and Cys-376-Cys-382. In terms of domain architecture, PAN spans 341–422 (CSRGDINQFF…EGNIFYLRLA (82 aa)). A helical transmembrane segment spans residues 440 to 460 (LIFGAVLGSLGVIVLVLLVVI). The Cytoplasmic portion of the chain corresponds to 461–828 (LILRYRRRKR…KKMTNDNSSA (368 aa)). The Protein kinase domain maps to 493-770 (KNFSDKLGGG…QVVQILEGVL (278 aa)). ATP contacts are provided by residues 499-507 (LGGGGFGSV) and Lys-521. Ser-527 carries the phosphoserine modification. Residues 582-600 (VEEKIVLGWKLRFQIALGT) form a caM-binding region. Asp-619 acts as the Proton acceptor in catalysis. Thr-653 carries the phosphothreonine modification. A disordered region spans residues 796 to 828 (ESSSSSSHNSSQNHKHSSSSSSSKKMTNDNSSA). Residues 797 to 828 (SSSSSSHNSSQNHKHSSSSSSSKKMTNDNSSA) are compositionally biased toward low complexity. Ser-815 bears the Phosphoserine mark.

The protein belongs to the protein kinase superfamily. Ser/Thr protein kinase family.

It localises to the cell membrane. The catalysed reaction is L-seryl-[protein] + ATP = O-phospho-L-seryl-[protein] + ADP + H(+). The enzyme catalyses L-threonyl-[protein] + ATP = O-phospho-L-threonyl-[protein] + ADP + H(+). In Arabidopsis thaliana (Mouse-ear cress), this protein is G-type lectin S-receptor-like serine/threonine-protein kinase At2g19130.